Reading from the N-terminus, the 350-residue chain is Dihydroorotate dehydrogenase (quinone) (350 aa).

Residues 65–69 and T89 each bind FMN; that span reads AGLDK. K69 serves as a coordination point for substrate. 114–118 is a binding site for substrate; sequence NRLGF. FMN is bound by residues N149 and N182. N182 is a substrate binding site. The active-site Nucleophile is the S185. N187 contacts substrate. The FMN site is built by K227 and T255. 256-257 lines the substrate pocket; it reads NT. Residues G278, G307, and 328-329 each bind FMN; that span reads YT.

This sequence belongs to the dihydroorotate dehydrogenase family. Type 2 subfamily. Monomer. FMN is required as a cofactor.

The protein localises to the cell membrane. It catalyses the reaction (S)-dihydroorotate + a quinone = orotate + a quinol. It functions in the pathway pyrimidine metabolism; UMP biosynthesis via de novo pathway; orotate from (S)-dihydroorotate (quinone route): step 1/1. Catalyzes the conversion of dihydroorotate to orotate with quinone as electron acceptor. This chain is Dihydroorotate dehydrogenase (quinone), found in Polaromonas naphthalenivorans (strain CJ2).